Reading from the N-terminus, the 224-residue chain is Serum amyloid P-component (224 aa).

Residues Met1–Ala19 form the signal peptide. In terms of domain architecture, Pentraxin (PTX) spans Arg24–Gly224. The N-linked (GlcNAc...) asparagine glycan is linked to Asn51. Cysteines 55 and 114 form a disulfide. Residues Asp77, Asn78, Glu155, Gln156, and Asp157 each contribute to the Ca(2+) site. N-linked (GlcNAc...) asparagine glycosylation occurs at Asn166. Gln167 contributes to the Ca(2+) binding site.

This sequence belongs to the pentraxin family. As to quaternary structure, homopentamer. Pentraxin (or pentaxin) have a discoid arrangement of 5 non-covalently bound subunits. Ca(2+) serves as cofactor.

The protein localises to the secreted. The polypeptide is Serum amyloid P-component (APCS) (Bos taurus (Bovine)).